The chain runs to 303 residues: Elongation factor Ts (303 aa).

The segment at 81-84 is involved in Mg(2+) ion dislocation from EF-Tu; it reads TDFV.

Belongs to the EF-Ts family.

The protein resides in the cytoplasm. Its function is as follows. Associates with the EF-Tu.GDP complex and induces the exchange of GDP to GTP. It remains bound to the aminoacyl-tRNA.EF-Tu.GTP complex up to the GTP hydrolysis stage on the ribosome. The polypeptide is Elongation factor Ts (Mesomycoplasma hyopneumoniae (strain J / ATCC 25934 / NCTC 10110) (Mycoplasma hyopneumoniae)).